Consider the following 146-residue polypeptide: Hemoglobin subunit beta-1/2 (146 aa).

Residues 2 to 146 form the Globin domain; the sequence is EWTDKERSII…VVSALGKQYH (145 aa). Residues His-63 and His-92 each contribute to the heme b site.

It belongs to the globin family. As to quaternary structure, hb1 is a heterotetramer of two alpha-1 chains and two beta chains. Hb2 is a heterotetramer of two alpha-2 chains and two beta chains. As to expression, red blood cells.

Functionally, involved in oxygen transport from gills to the various peripheral tissues. In Trematomus newnesi (Dusky notothen), this protein is Hemoglobin subunit beta-1/2.